The following is a 103-amino-acid chain: Large ribosomal subunit protein uL24 (103 aa).

The protein belongs to the universal ribosomal protein uL24 family. As to quaternary structure, part of the 50S ribosomal subunit.

Its function is as follows. One of two assembly initiator proteins, it binds directly to the 5'-end of the 23S rRNA, where it nucleates assembly of the 50S subunit. Functionally, one of the proteins that surrounds the polypeptide exit tunnel on the outside of the subunit. The protein is Large ribosomal subunit protein uL24 of Latilactobacillus sakei subsp. sakei (strain 23K) (Lactobacillus sakei subsp. sakei).